A 147-amino-acid polypeptide reads, in one-letter code: MAWHRNIKTRGAMVVAAVTLGASGVAAAQSMSTNSASFNAGYGRSSGQESRMVEYSTRDANGNRVVVDGVMLTGSDQSVFSSSRSSGSLDAYSGVGAVGGYAGSTAIGNNLTVITQGNNNTVIVNSSQVNSGNVTAGANVVKGGTPK.

Involved in attachment of the holdfast to the cell. The holdfast is a structure that allows the bacteria to firmly adheres to surfaces. The chain is Holdfast attachment protein A (hfaA) from Caulobacter vibrioides (strain ATCC 19089 / CIP 103742 / CB 15) (Caulobacter crescentus).